Here is a 483-residue protein sequence, read N- to C-terminus: Glycogen synthase kinase-3 alpha (483 aa).

Residues 1-15 (MSGGGPSGGGPGGSG) are compositionally biased toward gly residues. Positions 1–96 (MSGGGPSGGG…PPPGVKLGRD (96 aa)) are disordered. Position 2 is an N-acetylserine (Ser2). Position 2 is a phosphoserine (Ser2). Ser21 is modified (phosphoserine; by PKB/AKT1). Residues 25–82 (PGGGGGGGGGGPGGSASGPGGTGGGKASVGAMGGGVGASSSGGGPGGSGGGGSGGPGA) show a composition bias toward gly residues. 3 positions are modified to phosphoserine: Ser72, Ser77, and Ser97. Residues 119–403 (YTDIKVIGNG…PLEACAHSFF (285 aa)) form the Protein kinase domain. ATP is bound by residues 125-133 (IGNGSFGVV) and Lys148. The Proton acceptor role is filled by Asp244. A Phosphotyrosine modification is found at Tyr279. Residues 449-483 (AGTTTLTPSSQALTETPTSSDWQSTDATPTLTNSS) are disordered.

Belongs to the protein kinase superfamily. CMGC Ser/Thr protein kinase family. GSK-3 subfamily. Monomer. Interacts with ARRB2. Interacts with AXIN1 and CTNNB1/beta-catenin. Interacts with CTNND2. Interacts with LMBR1L. Interacts with DDX3X. Interacts with TNFRSF10B. Interacts with RICTOR; the interaction results in phosphorylation of RICTOR at 'Thr-1695' by GSK3A which facilitates FBXW7-mediated ubiquitination and subsequent degradation of RICTOR. As to quaternary structure, (Microbial infection) Interacts with M.tuberculosis PtpA. Phosphorylated by AKT1 at Ser-21: upon insulin-mediated signaling, the activated PKB/AKT1 protein kinase phosphorylates and deactivates GSK3A, resulting in the dephosphorylation and activation of GYS1. Activated by phosphorylation at Tyr-279. Post-translationally, (Microbial infection) Dephosphorylated at Tyr-279 by M.tuberculosis PtpA, which leads to prevention of apoptosis during early stages of microbial infection.

It carries out the reaction L-seryl-[tau protein] + ATP = O-phospho-L-seryl-[tau protein] + ADP + H(+). The enzyme catalyses L-threonyl-[tau protein] + ATP = O-phospho-L-threonyl-[tau protein] + ADP + H(+). It catalyses the reaction L-seryl-[protein] + ATP = O-phospho-L-seryl-[protein] + ADP + H(+). The catalysed reaction is L-threonyl-[protein] + ATP = O-phospho-L-threonyl-[protein] + ADP + H(+). With respect to regulation, activated by phosphorylation at Tyr-279. In response to insulin, inhibited by phosphorylation at Ser-21 by PKB/AKT1; phosphorylation at this site causes a conformational change, preventing access of substrates to the active site. Inhibited by lithium. Functionally, constitutively active protein kinase that acts as a negative regulator in the hormonal control of glucose homeostasis, Wnt signaling and regulation of transcription factors and microtubules, by phosphorylating and inactivating glycogen synthase (GYS1 or GYS2), CTNNB1/beta-catenin, APC and AXIN1. Requires primed phosphorylation of the majority of its substrates. Contributes to insulin regulation of glycogen synthesis by phosphorylating and inhibiting GYS1 activity and hence glycogen synthesis. Regulates glycogen metabolism in liver, but not in muscle. May also mediate the development of insulin resistance by regulating activation of transcription factors. In Wnt signaling, regulates the level and transcriptional activity of nuclear CTNNB1/beta-catenin. Facilitates amyloid precursor protein (APP) processing and the generation of APP-derived amyloid plaques found in Alzheimer disease. May be involved in the regulation of replication in pancreatic beta-cells. Is necessary for the establishment of neuronal polarity and axon outgrowth. Through phosphorylation of the anti-apoptotic protein MCL1, may control cell apoptosis in response to growth factors deprivation. Acts as a regulator of autophagy by mediating phosphorylation of KAT5/TIP60 under starvation conditions which activates KAT5/TIP60 acetyltransferase activity and promotes acetylation of key autophagy regulators, such as ULK1 and RUBCNL/Pacer. Negatively regulates extrinsic apoptotic signaling pathway via death domain receptors. Promotes the formation of an anti-apoptotic complex, made of DDX3X, BRIC2 and GSK3B, at death receptors, including TNFRSF10B. The anti-apoptotic function is most effective with weak apoptotic signals and can be overcome by stronger stimulation. Phosphorylates mTORC2 complex component RICTOR at 'Thr-1695' which facilitates FBXW7-mediated ubiquitination and subsequent degradation of RICTOR. In Homo sapiens (Human), this protein is Glycogen synthase kinase-3 alpha (GSK3A).